The sequence spans 310 residues: S-methyl-5'-thioadenosine phosphorylase (310 aa).

Residues T20, 62–63 (RH), and 95–96 (SA) contribute to the phosphate site. A substrate-binding site is contributed by M197. S198 is a phosphate binding site. 221-223 (DYD) provides a ligand contact to substrate.

This sequence belongs to the PNP/MTAP phosphorylase family. MTAP subfamily. In terms of assembly, homotrimer.

The protein resides in the cytoplasm. Its subcellular location is the nucleus. The enzyme catalyses S-methyl-5'-thioadenosine + phosphate = 5-(methylsulfanyl)-alpha-D-ribose 1-phosphate + adenine. It participates in amino-acid biosynthesis; L-methionine biosynthesis via salvage pathway; S-methyl-5-thio-alpha-D-ribose 1-phosphate from S-methyl-5'-thioadenosine (phosphorylase route): step 1/1. Functionally, catalyzes the reversible phosphorylation of S-methyl-5'-thioadenosine (MTA) to adenine and 5-methylthioribose-1-phosphate. Involved in the breakdown of MTA, a major by-product of polyamine biosynthesis. Responsible for the first step in the methionine salvage pathway after MTA has been generated from S-adenosylmethionine. Has broad substrate specificity with 6-aminopurine nucleosides as preferred substrates. The chain is S-methyl-5'-thioadenosine phosphorylase from Neurospora crassa (strain ATCC 24698 / 74-OR23-1A / CBS 708.71 / DSM 1257 / FGSC 987).